We begin with the raw amino-acid sequence, 331 residues long: Protein FLX-like 1 (331 aa).

Residues 1–51 (MSGRNRGPPPPSMKGGSYSGLQAPVHQPPFVRGLGGGPVPPPPHPSMIDDS) form a disordered region. Residues 69 to 252 (ILEDRLAAQN…AEIANSETSA (184 aa)) adopt a coiled-coil conformation. Residues 306-321 (QAAWAGGYDPQQQQQQ) show a composition bias toward low complexity. The segment at 306–331 (QAAWAGGYDPQQQQQQQPPPQGQGHR) is disordered. Over residues 322-331 (QPPPQGQGHR) the composition is skewed to pro residues.

Belongs to the FLX family. Interacts with FRI.

Functionally, has no transcriptional activation activity. The polypeptide is Protein FLX-like 1 (FLXL1) (Arabidopsis thaliana (Mouse-ear cress)).